The following is a 263-amino-acid chain: Non-homologous end joining protein Ku 3 (263 aa).

In terms of domain architecture, Ku spans 6–169; the sequence is FGLVSVPVQL…WADEVRDPHR (164 aa).

This sequence belongs to the prokaryotic Ku family. Homodimer. Interacts with LigD.

In terms of biological role, with LigD forms a non-homologous end joining (NHEJ) DNA repair enzyme, which repairs dsDNA breaks with reduced fidelity. Binds linear dsDNA with 5'- and 3'- overhangs but not closed circular dsDNA nor ssDNA. Recruits and stimulates the ligase activity of LigD. This is Non-homologous end joining protein Ku 3 from Saccharopolyspora erythraea (strain ATCC 11635 / DSM 40517 / JCM 4748 / NBRC 13426 / NCIMB 8594 / NRRL 2338).